The primary structure comprises 348 residues: Phospho-2-dehydro-3-deoxyheptonate aldolase, Trp-sensitive (348 aa).

This sequence belongs to the class-I DAHP synthase family.

It carries out the reaction D-erythrose 4-phosphate + phosphoenolpyruvate + H2O = 7-phospho-2-dehydro-3-deoxy-D-arabino-heptonate + phosphate. Its pathway is metabolic intermediate biosynthesis; chorismate biosynthesis; chorismate from D-erythrose 4-phosphate and phosphoenolpyruvate: step 1/7. Functionally, stereospecific condensation of phosphoenolpyruvate (PEP) and D-erythrose-4-phosphate (E4P) giving rise to 3-deoxy-D-arabino-heptulosonate-7-phosphate (DAHP). The chain is Phospho-2-dehydro-3-deoxyheptonate aldolase, Trp-sensitive (aroH) from Shigella flexneri.